Here is a 371-residue protein sequence, read N- to C-terminus: Queuine tRNA-ribosyltransferase (371 aa).

Residue Asp-90 is the Proton acceptor of the active site. Substrate-binding positions include 90–94, Asp-144, Gln-189, and Gly-215; that span reads DSGGF. Positions 246 to 252 are RNA binding; that stretch reads GVGTPEN. Asp-265 (nucleophile) is an active-site residue. Positions 270–274 are RNA binding; important for wobble base 34 recognition; sequence TRNAR. Residues Cys-303, Cys-305, Cys-308, and His-334 each coordinate Zn(2+).

Belongs to the queuine tRNA-ribosyltransferase family. As to quaternary structure, homodimer. Within each dimer, one monomer is responsible for RNA recognition and catalysis, while the other monomer binds to the replacement base PreQ1. It depends on Zn(2+) as a cofactor.

It catalyses the reaction 7-aminomethyl-7-carbaguanine + guanosine(34) in tRNA = 7-aminomethyl-7-carbaguanosine(34) in tRNA + guanine. Its pathway is tRNA modification; tRNA-queuosine biosynthesis. Functionally, catalyzes the base-exchange of a guanine (G) residue with the queuine precursor 7-aminomethyl-7-deazaguanine (PreQ1) at position 34 (anticodon wobble position) in tRNAs with GU(N) anticodons (tRNA-Asp, -Asn, -His and -Tyr). Catalysis occurs through a double-displacement mechanism. The nucleophile active site attacks the C1' of nucleotide 34 to detach the guanine base from the RNA, forming a covalent enzyme-RNA intermediate. The proton acceptor active site deprotonates the incoming PreQ1, allowing a nucleophilic attack on the C1' of the ribose to form the product. After dissociation, two additional enzymatic reactions on the tRNA convert PreQ1 to queuine (Q), resulting in the hypermodified nucleoside queuosine (7-(((4,5-cis-dihydroxy-2-cyclopenten-1-yl)amino)methyl)-7-deazaguanosine). The polypeptide is Queuine tRNA-ribosyltransferase (Helicobacter pylori (strain J99 / ATCC 700824) (Campylobacter pylori J99)).